The chain runs to 323 residues: Serine racemase (323 aa).

ATP is bound by residues Ser-32, Ser-33, and Lys-52. The active-site Proton acceptor is Lys-57. Lys-57 carries the lysino-D-alanine (Lys); alternate modification. Lys-57 carries the post-translational modification N6-(pyridoxal phosphate)lysine; alternate. Thr-79 lines the Ca(2+) pocket. Ser-82 acts as the Proton acceptor in catalysis. Asn-84 contributes to the pyridoxal 5'-phosphate binding site. Residues Gln-87 and Tyr-119 each contribute to the ATP site. Asp-176 contacts Mg(2+). 5 residues coordinate pyridoxal 5'-phosphate: Gly-183, Gly-184, Gly-185, Gly-186, and Leu-187. Positions 208, 212, and 214 each coordinate Ca(2+). Residues Glu-208, Gly-212, and Asp-214 each contribute to the Mg(2+) site. Residues Glu-208, Gly-212, and Asp-214 each coordinate Mn(2+). Lys-277 lines the ATP pocket. Pyridoxal 5'-phosphate is bound at residue Ser-308. Asn-311 contributes to the ATP binding site.

Belongs to the serine/threonine dehydratase family. In terms of assembly, homodimer. The cofactor is Mg(2+). Mn(2+) serves as cofactor. Ca(2+) is required as a cofactor. It depends on pyridoxal 5'-phosphate as a cofactor. Modification of the active site Lys by its substrate Ser to lysino-D-alanine reduces but does not abolish enzyme activity.

It carries out the reaction L-serine = D-serine. It catalyses the reaction L-serine = pyruvate + NH4(+). The enzyme catalyses D-serine = pyruvate + NH4(+). With respect to regulation, allosterically activated by ATP, by magnesium, and possibly also by other divalent metal cations. Its function is as follows. Catalyzes the synthesis of D-serine from L-serine. Has dehydratase activity towards both L-serine and D-serine. This is Serine racemase from Schizosaccharomyces pombe (strain 972 / ATCC 24843) (Fission yeast).